A 545-amino-acid polypeptide reads, in one-letter code: CTP synthase (545 aa).

Residues M1 to L266 form an amidoligase domain region. S14 serves as a coordination point for CTP. S14 provides a ligand contact to UTP. ATP contacts are provided by residues S15–I20 and D72. Mg(2+)-binding residues include D72 and E140. CTP is bound by residues D147 to E149, K187 to Q192, and K223. UTP-binding positions include K187–Q192 and K223. K239–V241 is a binding site for ATP. The Glutamine amidotransferase type-1 domain maps to T291 to R542. Residue G352 participates in L-glutamine binding. The active-site Nucleophile; for glutamine hydrolysis is C379. Residues L380–Q383, E403, and R470 each bind L-glutamine. Catalysis depends on residues H515 and E517.

Belongs to the CTP synthase family. As to quaternary structure, homotetramer.

It carries out the reaction UTP + L-glutamine + ATP + H2O = CTP + L-glutamate + ADP + phosphate + 2 H(+). The enzyme catalyses L-glutamine + H2O = L-glutamate + NH4(+). It catalyses the reaction UTP + NH4(+) + ATP = CTP + ADP + phosphate + 2 H(+). It participates in pyrimidine metabolism; CTP biosynthesis via de novo pathway; CTP from UDP: step 2/2. With respect to regulation, allosterically activated by GTP, when glutamine is the substrate; GTP has no effect on the reaction when ammonia is the substrate. The allosteric effector GTP functions by stabilizing the protein conformation that binds the tetrahedral intermediate(s) formed during glutamine hydrolysis. Inhibited by the product CTP, via allosteric rather than competitive inhibition. Functionally, catalyzes the ATP-dependent amination of UTP to CTP with either L-glutamine or ammonia as the source of nitrogen. Regulates intracellular CTP levels through interactions with the four ribonucleotide triphosphates. This Klebsiella pneumoniae (strain 342) protein is CTP synthase.